We begin with the raw amino-acid sequence, 333 residues long: Phosphate acyltransferase (333 aa).

Belongs to the PlsX family. Homodimer. Probably interacts with PlsY.

It is found in the cytoplasm. It catalyses the reaction a fatty acyl-[ACP] + phosphate = an acyl phosphate + holo-[ACP]. It functions in the pathway lipid metabolism; phospholipid metabolism. Catalyzes the reversible formation of acyl-phosphate (acyl-PO(4)) from acyl-[acyl-carrier-protein] (acyl-ACP). This enzyme utilizes acyl-ACP as fatty acyl donor, but not acyl-CoA. In Ligilactobacillus salivarius (strain UCC118) (Lactobacillus salivarius), this protein is Phosphate acyltransferase.